The primary structure comprises 470 residues: Sorting nexin-17 (470 aa).

The 109-residue stretch at 1 to 109 folds into the PX domain; that stretch reads MHFSIPETES…SFLRRAQQET (109 aa). A 1,2-diacyl-sn-glycero-3-phospho-(1D-myo-inositol-3-phosphate) is bound by residues arginine 36, serine 38, lysine 62, and arginine 75. One can recognise a Ras-associating domain in the interval 115–206; sequence EEVSLEVLLS…YKIVLRKSYW (92 aa). The interval 115 to 432 is FERM-like; it reads EEVSLEVLLS…DASRESMVKL (318 aa). Positions 270-432 are PTB-like F3 module; the sequence is GYLRFDACVA…DASRESMVKL (163 aa). Serine 336, serine 407, serine 409, serine 415, serine 421, serine 437, and serine 440 each carry phosphoserine. The interval 401–426 is disordered; that stretch reads GGTLRRSDSQQAVKSPPLLESPDASR.

Belongs to the sorting nexin family. As to quaternary structure, monomer. Interacts with APP (via cytoplasmic YXNPXY motif). Interacts with KIF1B. Interacts with the C-termini of P-selectin, PTC, LDLR, VLDLR, LRP1 and LRP8. Interacts with KRIT1 (via N-terminus). Interacts with HRAS. Interacts with ITGB1 and ITGB5 (via NPxY motif). Interacts with CCDC22 and CCDC93; the interaction associates SNX17 with the CCC complex. Interacts (via C-terminus) with VPS26C and VPS35L; the interactions are direct and associate SNX17 with the retriever complex. As to expression, detected in brain neurons (at protein level). Broadly expressed, with highest levels in brain and placenta, and lowest levels in colon, intestine and liver.

It is found in the cytoplasm. The protein localises to the early endosome. The protein resides in the cytoplasmic vesicle membrane. Critical regulator of endosomal recycling of numerous surface proteins, including integrins, signaling receptor and channels. Binds to NPxY sequences in the cytoplasmic tails of target cargos. Associates with retriever and CCC complexes to prevent lysosomal degradation and promote cell surface recycling of numerous cargos such as integrins ITGB1, ITGB5 and their associated alpha subunits. Also required for maintenance of normal cell surface levels of APP and LRP1. Interacts with membranes containing phosphatidylinositol 3-phosphate (PtdIns(3P)). In Mus musculus (Mouse), this protein is Sorting nexin-17 (Snx17).